The chain runs to 352 residues: Ion-translocating oxidoreductase complex subunit D (352 aa).

The next 4 membrane-spanning stretches (helical) occupy residues 20–40 (IMLL…WFFG), 42–62 (GTLV…ALVL), 89–109 (IPPL…VIIA), and 123–143 (PAMI…TSWL). Residue threonine 187 is modified to FMN phosphoryl threonine. A run of 5 helical transmembrane segments spans residues 214–234 (ILAG…GVWL), 242–262 (WHVP…GWLF), 267–287 (LAAP…FFIL), 301–321 (LIFG…GGYP), and 322–342 (DGVA…DYYT).

The protein belongs to the NqrB/RnfD family. In terms of assembly, the complex is composed of six subunits: RsxA, RsxB, RsxC, RsxD, RsxE and RsxG. FMN is required as a cofactor.

Its subcellular location is the cell inner membrane. In terms of biological role, part of a membrane-bound complex that couples electron transfer with translocation of ions across the membrane. Required to maintain the reduced state of SoxR. This Escherichia coli (strain UTI89 / UPEC) protein is Ion-translocating oxidoreductase complex subunit D.